The primary structure comprises 335 residues: tRNA N6-adenosine threonylcarbamoyltransferase (335 aa).

His-110 and His-114 together coordinate Fe cation. Substrate is bound by residues Leu-132–Gly-136, Asp-165, Gly-178, and Asn-271. Position 299 (Asp-299) interacts with Fe cation.

Belongs to the KAE1 / TsaD family. It depends on Fe(2+) as a cofactor.

It is found in the cytoplasm. It catalyses the reaction L-threonylcarbamoyladenylate + adenosine(37) in tRNA = N(6)-L-threonylcarbamoyladenosine(37) in tRNA + AMP + H(+). In terms of biological role, required for the formation of a threonylcarbamoyl group on adenosine at position 37 (t(6)A37) in tRNAs that read codons beginning with adenine. Is involved in the transfer of the threonylcarbamoyl moiety of threonylcarbamoyl-AMP (TC-AMP) to the N6 group of A37, together with TsaE and TsaB. TsaD likely plays a direct catalytic role in this reaction. This chain is tRNA N6-adenosine threonylcarbamoyltransferase, found in Campylobacter jejuni subsp. doylei (strain ATCC BAA-1458 / RM4099 / 269.97).